A 538-amino-acid chain; its full sequence is Bifunctional purine biosynthesis protein PurH (538 aa).

The region spanning 8–158 (IPAPDKVKIR…KNHAYVTVVT (151 aa)) is the MGS-like domain.

It belongs to the PurH family.

It catalyses the reaction (6R)-10-formyltetrahydrofolate + 5-amino-1-(5-phospho-beta-D-ribosyl)imidazole-4-carboxamide = 5-formamido-1-(5-phospho-D-ribosyl)imidazole-4-carboxamide + (6S)-5,6,7,8-tetrahydrofolate. It carries out the reaction IMP + H2O = 5-formamido-1-(5-phospho-D-ribosyl)imidazole-4-carboxamide. Its pathway is purine metabolism; IMP biosynthesis via de novo pathway; 5-formamido-1-(5-phospho-D-ribosyl)imidazole-4-carboxamide from 5-amino-1-(5-phospho-D-ribosyl)imidazole-4-carboxamide (10-formyl THF route): step 1/1. The protein operates within purine metabolism; IMP biosynthesis via de novo pathway; IMP from 5-formamido-1-(5-phospho-D-ribosyl)imidazole-4-carboxamide: step 1/1. This Agrobacterium fabrum (strain C58 / ATCC 33970) (Agrobacterium tumefaciens (strain C58)) protein is Bifunctional purine biosynthesis protein PurH.